The primary structure comprises 258 residues: Aspartate/glutamate leucyltransferase (258 aa).

This sequence belongs to the R-transferase family. Bpt subfamily.

It localises to the cytoplasm. The catalysed reaction is N-terminal L-glutamyl-[protein] + L-leucyl-tRNA(Leu) = N-terminal L-leucyl-L-glutamyl-[protein] + tRNA(Leu) + H(+). It catalyses the reaction N-terminal L-aspartyl-[protein] + L-leucyl-tRNA(Leu) = N-terminal L-leucyl-L-aspartyl-[protein] + tRNA(Leu) + H(+). In terms of biological role, functions in the N-end rule pathway of protein degradation where it conjugates Leu from its aminoacyl-tRNA to the N-termini of proteins containing an N-terminal aspartate or glutamate. The protein is Aspartate/glutamate leucyltransferase of Bradyrhizobium sp. (strain BTAi1 / ATCC BAA-1182).